Reading from the N-terminus, the 110-residue chain is Large ribosomal subunit protein uL24 (110 aa).

Belongs to the universal ribosomal protein uL24 family. In terms of assembly, part of the 50S ribosomal subunit.

In terms of biological role, one of two assembly initiator proteins, it binds directly to the 5'-end of the 23S rRNA, where it nucleates assembly of the 50S subunit. One of the proteins that surrounds the polypeptide exit tunnel on the outside of the subunit. This is Large ribosomal subunit protein uL24 from Chloroflexus aurantiacus (strain ATCC 29366 / DSM 635 / J-10-fl).